Consider the following 152-residue polypeptide: SsrA-binding protein (152 aa).

The protein belongs to the SmpB family.

Its subcellular location is the cytoplasm. Its function is as follows. Required for rescue of stalled ribosomes mediated by trans-translation. Binds to transfer-messenger RNA (tmRNA), required for stable association of tmRNA with ribosomes. tmRNA and SmpB together mimic tRNA shape, replacing the anticodon stem-loop with SmpB. tmRNA is encoded by the ssrA gene; the 2 termini fold to resemble tRNA(Ala) and it encodes a 'tag peptide', a short internal open reading frame. During trans-translation Ala-aminoacylated tmRNA acts like a tRNA, entering the A-site of stalled ribosomes, displacing the stalled mRNA. The ribosome then switches to translate the ORF on the tmRNA; the nascent peptide is terminated with the 'tag peptide' encoded by the tmRNA and targeted for degradation. The ribosome is freed to recommence translation, which seems to be the essential function of trans-translation. The protein is SsrA-binding protein of Rickettsia bellii (strain RML369-C).